The chain runs to 616 residues: Chaperone protein HscA homolog (616 aa).

This sequence belongs to the heat shock protein 70 family.

In terms of biological role, chaperone involved in the maturation of iron-sulfur cluster-containing proteins. Has a low intrinsic ATPase activity which is markedly stimulated by HscB. This Mannheimia succiniciproducens (strain KCTC 0769BP / MBEL55E) protein is Chaperone protein HscA homolog.